The chain runs to 379 residues: Guanine nucleotide-binding protein G(s) subunit alpha (379 aa).

A disordered region spans residues 1-29 (MGCFGSAGAKGDAEENKKRKEANKNINKQ). Gly-2 carries the N-palmitoyl glycine lipid modification. Cys-3 is lipidated: S-palmitoyl cysteine. One can recognise a G-alpha domain in the interval 39–379 (ATHRLLLLGA…RMHLRQYELL (341 aa)). The segment at 42 to 55 (RLLLLGAGESGKST) is G1 motif. GTP contacts are provided by residues 47 to 54 (GAGESGKS), 183 to 189 (LRCRVLT), 208 to 212 (DVGGQ), 277 to 280 (NKQD), and Ala-351. Mg(2+)-binding residues include Ser-54 and Thr-189. Residues 181–189 (DILRCRVLT) are G2 motif. The tract at residues 204 to 213 (FHMFDVGGQR) is G3 motif. The interval 273 to 280 (ILFLNKQD) is G4 motif. The interval 349 to 354 (TCAVDT) is G5 motif.

Belongs to the G-alpha family. G(s) subfamily. In terms of assembly, g proteins are composed of 3 units; alpha, beta and gamma. The alpha chain contains the guanine nucleotide binding site.

Its function is as follows. Guanine nucleotide-binding proteins (G proteins) are involved as modulators or transducers in various transmembrane signaling systems. The G(s) protein is involved in hormonal regulation of adenylate cyclase: it activates the cyclase in response to beta-adrenergic stimuli. This Homarus americanus (American lobster) protein is Guanine nucleotide-binding protein G(s) subunit alpha.